A 366-amino-acid polypeptide reads, in one-letter code: DNA replication and repair protein RecF (366 aa).

ATP is bound at residue 30–37 (GDNGMGKT).

The protein belongs to the RecF family.

The protein resides in the cytoplasm. Its function is as follows. The RecF protein is involved in DNA metabolism; it is required for DNA replication and normal SOS inducibility. RecF binds preferentially to single-stranded, linear DNA. It also seems to bind ATP. The polypeptide is DNA replication and repair protein RecF (Azobacteroides pseudotrichonymphae genomovar. CFP2).